A 163-amino-acid chain; its full sequence is uncharacterized protein (163 aa).

Residues 1-10 show a composition bias toward basic and acidic residues; it reads MTHPLPHDSH. Disordered regions lie at residues 1–21 and 71–112; these read MTHP…VNKS and SKQP…EQRR. Polar residues predominate over residues 90–105; that stretch reads PASSLQDHSRLTSLSR.

This is an uncharacterized protein from Homo sapiens (Human).